We begin with the raw amino-acid sequence, 134 residues long: Large ribosomal subunit protein bL20 (134 aa).

It belongs to the bacterial ribosomal protein bL20 family.

Binds directly to 23S ribosomal RNA and is necessary for the in vitro assembly process of the 50S ribosomal subunit. It is not involved in the protein synthesizing functions of that subunit. The polypeptide is Large ribosomal subunit protein bL20 (Sinorhizobium medicae (strain WSM419) (Ensifer medicae)).